Consider the following 530-residue polypeptide: UDP-glucuronosyltransferase 2A3 (530 aa).

An N-terminal signal peptide occupies residues 1–23 (MAPGKLASAVLLLLLCCAGSGFC). The Extracellular portion of the chain corresponds to 24–494 (GKVLVWPCEM…SWFQYHSLDV (471 aa)). The N-linked (GlcNAc...) asparagine glycan is linked to N316. Residues 495–515 (IGFLLACVASAILLVTKCCLF) traverse the membrane as a helical segment. Residues 516-530 (SFQNFIKIGKRIKKE) lie on the Cytoplasmic side of the membrane.

This sequence belongs to the UDP-glycosyltransferase family. In terms of tissue distribution, specifically expressed in liver and small intestine.

It is found in the membrane. The catalysed reaction is glucuronate acceptor + UDP-alpha-D-glucuronate = acceptor beta-D-glucuronoside + UDP + H(+). Its function is as follows. UDP-glucuronosyltransferases catalyze phase II biotransformation reactions in which lipophilic substrates are conjugated with glucuronic acid to increase water solubility and enhance excretion. They are of major importance in the conjugation and subsequent elimination of potentially toxic xenobiotics and endogenous compounds. The chain is UDP-glucuronosyltransferase 2A3 (UGT2A3) from Cavia porcellus (Guinea pig).